The following is a 717-amino-acid chain: DNA ligase (717 aa).

Residues 41 to 45 (DARYD), 90 to 91 (SL), and Glu124 each bind NAD(+). Lys126 acts as the N6-AMP-lysine intermediate in catalysis. Positions 147, 183, 299, and 323 each coordinate NAD(+). Zn(2+) is bound by residues Cys428, Cys431, Cys446, and Cys452. Positions 636–717 (ADYSPVAGKT…WLQLINEHHI (82 aa)) constitute a BRCT domain.

This sequence belongs to the NAD-dependent DNA ligase family. LigA subfamily. The cofactor is Mg(2+). Requires Mn(2+) as cofactor.

The catalysed reaction is NAD(+) + (deoxyribonucleotide)n-3'-hydroxyl + 5'-phospho-(deoxyribonucleotide)m = (deoxyribonucleotide)n+m + AMP + beta-nicotinamide D-nucleotide.. Its function is as follows. DNA ligase that catalyzes the formation of phosphodiester linkages between 5'-phosphoryl and 3'-hydroxyl groups in double-stranded DNA using NAD as a coenzyme and as the energy source for the reaction. It is essential for DNA replication and repair of damaged DNA. This Bartonella bacilliformis (strain ATCC 35685 / KC583 / Herrer 020/F12,63) protein is DNA ligase.